A 214-amino-acid polypeptide reads, in one-letter code: Endosomal/vacuolar adapter protein YPT35 (214 aa).

The disordered stretch occupies residues 1–63 (MNDKISFLPP…ATITRTRPRR (63 aa)). The short motif at 5 to 15 (ISFLPPEPIQL) is the PxP element. Over residues 16 to 31 (LDEDSTEPELDIDSQQ) the composition is skewed to acidic residues. A compositionally biased stretch (low complexity) spans 38–58 (SASNSNDSTSHSNDCGATITR). Ser-65 and Ser-66 each carry phosphoserine. Residues 73 to 213 (FQKAHVSDCT…IQFLEPSKRV (141 aa)) enclose the PX domain.

The protein belongs to the YPT35 family. As to quaternary structure, interacts with RBD2, YIF1, YIP1 and YIP4.

Its subcellular location is the endosome membrane. The protein localises to the vacuole membrane. Recruits the lipid transfer protein VPS13 to endosomal and vacuolar membranes. In Saccharomyces cerevisiae (strain YJM789) (Baker's yeast), this protein is Endosomal/vacuolar adapter protein YPT35 (YPT35).